Consider the following 397-residue polypeptide: Keratinocyte differentiation factor 1 (397 aa).

The span at 1-16 (MPRPGQPRPSSGPPRL) shows a compositional bias: pro residues. Disordered regions lie at residues 1-67 (MPRP…SAEP), 124-158 (EAAW…MGSS), and 191-214 (PLAD…RGSE). Over residues 44-55 (RPDPKDPGHHGP) the composition is skewed to basic and acidic residues. A compositionally biased stretch (polar residues) spans 201-211 (SLPSTFTSSPR). Position 218 is a phosphoserine (Ser-218). Disordered regions lie at residues 304–339 (ISTR…TMVG) and 361–392 (ARKL…GAPL). Low complexity predominate over residues 321-330 (ARSTAPAAAP). Residues 375–388 (SQDSSFQGTDTDSS) are compositionally biased toward polar residues.

It localises to the cytoplasm. It is found in the cell junction. In terms of biological role, plays a role in the regulation of the epidermis formation during early development. Required both as an inhibitor of basal cell proliferation and a promoter of differentiation of basal progenitor cell progeny. This is Keratinocyte differentiation factor 1 (Kdf1) from Rattus norvegicus (Rat).